The primary structure comprises 302 residues: Merozoite surface protein 2 (302 aa).

An N-terminal signal peptide occupies residues 1–20 (MKVIKTLSIINFFIFVTFNI). Residues Asn-22 and Asn-36 are each glycosylated (N-linked (GlcNAc...) asparagine). Positions 44 to 228 (EESKPPTGAV…EQTESPELQS (185 aa)) are polymorphic region. The stretch at 55 to 60 (GSGAGA) is one 1; partial repeat. The segment at 55-113 (GSGAGAGSGAGAVAGSGAGAVAGSGAGAVAGSGAGAVAGSGAGAVAGSGAGAVAGSGAG) is 8 X 8 AA tandem repeats of G-S-G-A-G-A-V-A. Tandem repeats lie at residues 61 to 68 (GSGAGAVA), 69 to 76 (GSGAGAVA), 77 to 84 (GSGAGAVA), 85 to 92 (GSGAGAVA), 93 to 100 (GSGAGAVA), and 101 to 108 (GSGAGAVA). The 8; partial repeat unit spans residues 109–113 (GSGAG). The disordered stretch occupies residues 114–263 (NGANPGADAE…DSQKECTDGN (150 aa)). Positions 125–150 (SPSTPATTTTTTTTNDAEASTSTSSE) are enriched in low complexity. The segment covering 151–167 (NRNHNNAETNPKGKGEV) has biased composition (basic and acidic residues). 2 stretches are compositionally biased toward polar residues: residues 169-195 (KPNQ…NVPR) and 202-230 (KSPT…QSAP). N-linked (GlcNAc...) asparagine glycosylation occurs at Asn-179. N-linked (GlcNAc...) asparagine glycosylation occurs at Asn-251. Cysteines 259 and 267 form a disulfide. Residues Asn-275 and Asn-276 are each glycosylated (N-linked (GlcNAc...) asparagine). Asn-276 carries the GPI-anchor amidated asparagine lipid modification. Positions 277 to 302 (SSNIASINKFVVLISATLVLSFAIFI) are cleaved as a propeptide — removed in mature form.

The protein localises to the cell membrane. In terms of biological role, may play a role in the merozoite attachment to the erythrocyte. This is Merozoite surface protein 2 from Plasmodium falciparum (isolate tak 9).